Reading from the N-terminus, the 343-residue chain is MKYIDEVKIQVFAGDGGNGVASFRREKFIPKGGPDGGDGGRGGSIYALADHNLNTLIDYRFTPVFRAKRGENGRGSDCYGKGAEDIVLRMPVGTIITDYMTGELVADLKQNQQKVLLAKGGKGGLGNLHFKSSTNRAPRQFTHGEAGEQFELKLELRVLADVGLLGLPNAGKSTLIRAVSAARPKVADYPFTTLYPNLGVVRVDAGRSFIMADIPGLIEGAAEGAGLGHRFLKHLSRTHLLLHIIDVAPFDENIDPVQSARALVDELRKFDEVLYRKPRWLIFNKVDLLPEDEQQAVCTHLLQALDWEDRWFAISALTGRGCQALTYAIMGYLEQLQPVTEET.

The Obg domain occupies 1-159 (MKYIDEVKIQ…FELKLELRVL (159 aa)). An OBG-type G domain is found at 160–334 (ADVGLLGLPN…LTYAIMGYLE (175 aa)). GTP is bound by residues 166–173 (GLPNAGKS), 191–195 (FTTLY), 213–216 (DIPG), 284–287 (NKVD), and 315–317 (SAL). Mg(2+) contacts are provided by Ser173 and Thr193.

Belongs to the TRAFAC class OBG-HflX-like GTPase superfamily. OBG GTPase family. In terms of assembly, monomer. Mg(2+) serves as cofactor.

It is found in the cytoplasm. In terms of biological role, an essential GTPase which binds GTP, GDP and possibly (p)ppGpp with moderate affinity, with high nucleotide exchange rates and a fairly low GTP hydrolysis rate. Plays a role in control of the cell cycle, stress response, ribosome biogenesis and in those bacteria that undergo differentiation, in morphogenesis control. This Nitrosomonas eutropha (strain DSM 101675 / C91 / Nm57) protein is GTPase Obg.